Reading from the N-terminus, the 297-residue chain is Translational activator of cytochrome c oxidase 1 (297 aa).

The segment at 20–45 (RGPGVRAAPPRDPRPSHPEPRGCGAA) is disordered. Basic and acidic residues predominate over residues 28–39 (PPRDPRPSHPEP). A coiled-coil region spans residues 191-227 (VEVEDREKKAVNLERALEMAIEAGAEDVKETEDEEER).

The protein belongs to the TACO1 family.

It localises to the mitochondrion. Functionally, acts as a translational activator of mitochondrially-encoded cytochrome c oxidase 1. The sequence is that of Translational activator of cytochrome c oxidase 1 (TACO1) from Homo sapiens (Human).